The sequence spans 339 residues: MKRPCEETTSESDLDETIDVGSENNYPGHATSSVMRSNSPTTTSQIMARKKRRGIIEKRRRDRINNSLSELRRLVPTAFEKQGSAKLEKAEILQMTVDHLKMLQATGGKGYFDAHALATDFMSIGFRECLTEVARYLSSVEGLDPSDPLRVRLVSHLSTCASQREAAVMTSSMAHHHHPLHPHHWAAAFHHLPTALLQPNGLHTSESTPCRLSTSSEVPSAHGSALLTATFAHADSALRMPSGGTVAPCVPPLSTSLLSLSATVHAAAAAATAAAHSFPLSFAGAFPMLPSNAAAAAAVAAATAISPPLSVSAASSPQQTSTGTNNKPYQPWGTEVGAF.

Positions 1–52 are disordered; that stretch reads MKRPCEETTSESDLDETIDVGSENNYPGHATSSVMRSNSPTTTSQIMARKKR. Over residues 8 to 18 the composition is skewed to acidic residues; sequence TTSESDLDETI. Positions 22 to 46 are enriched in polar residues; it reads SENNYPGHATSSVMRSNSPTTTSQI. The segment at 47–116 is transcriptional repression and interaction with NCOR1 and SIN3A; that stretch reads MARKKRRGII…GGKGYFDAHA (70 aa). The 56-residue stretch at 48–103 folds into the bHLH domain; it reads ARKKRRGIIEKRRRDRINNSLSELRRLVPTAFEKQGSAKLEKAEILQMTVDHLKML. Residues 122–157 form the Orange domain; it reads MSIGFRECLTEVARYLSSVEGLDPSDPLRVRLVSHL. The disordered stretch occupies residues 310 to 339; the sequence is SVSAASSPQQTSTGTNNKPYQPWGTEVGAF. Residues 318 to 328 are compositionally biased toward polar residues; it reads QQTSTGTNNKP. The YQPW motif signature appears at 329–332; it reads YQPW.

This sequence belongs to the HEY family. May self-associate. Interacts with ARNT. Interacts with GATA4, GATA6, HES1 and HEYL. Interacts with HDAC1, NCOR1 and SIN3A. In terms of tissue distribution, highly expressed in the aorta, lower expression detected in the heart, brain, kidney, lung, muscle, ovary and testis.

It localises to the nucleus. Its function is as follows. Transcriptional repressor which functions as a downstream effector of Notch signaling in cardiovascular development. Specifically required for the Notch-induced endocardial epithelial to mesenchymal transition, which is itself criticial for cardiac valve and septum development. May be required in conjunction with HEY1 to specify arterial cell fate or identity. Promotes maintenance of neuronal precursor cells and glial versus neuronal fate specification. Binds preferentially to the canonical E box sequence 5'-CACGTG-3'. Represses transcription by the cardiac transcriptional activators GATA4 and GATA6 and by the neuronal bHLH factors ASCL1/MASH1 and NEUROD4/MATH3. In Mus musculus (Mouse), this protein is Hairy/enhancer-of-split related with YRPW motif protein 2 (Hey2).